Reading from the N-terminus, the 345-residue chain is Glycerol-3-phosphate dehydrogenase [NAD(P)+] (345 aa).

NADPH-binding residues include Ser-11, Trp-12, His-32, Arg-33, and Lys-106. Residues Lys-106, Gly-137, and Ser-139 each coordinate sn-glycerol 3-phosphate. NADPH is bound at residue Ala-141. Sn-glycerol 3-phosphate contacts are provided by Lys-192, Asp-245, Ser-255, Arg-256, and Asn-257. Lys-192 (proton acceptor) is an active-site residue. Position 256 (Arg-256) interacts with NADPH. The NADPH site is built by Val-280 and Glu-282.

The protein belongs to the NAD-dependent glycerol-3-phosphate dehydrogenase family.

The protein resides in the cytoplasm. The enzyme catalyses sn-glycerol 3-phosphate + NAD(+) = dihydroxyacetone phosphate + NADH + H(+). It carries out the reaction sn-glycerol 3-phosphate + NADP(+) = dihydroxyacetone phosphate + NADPH + H(+). It functions in the pathway membrane lipid metabolism; glycerophospholipid metabolism. Functionally, catalyzes the reduction of the glycolytic intermediate dihydroxyacetone phosphate (DHAP) to sn-glycerol 3-phosphate (G3P), the key precursor for phospholipid synthesis. The protein is Glycerol-3-phosphate dehydrogenase [NAD(P)+] of Bacillus velezensis (strain DSM 23117 / BGSC 10A6 / LMG 26770 / FZB42) (Bacillus amyloliquefaciens subsp. plantarum).